The following is a 258-amino-acid chain: Acetylglutamate kinase (258 aa).

Substrate is bound by residues Gly-44–Gly-45, Arg-66, and Asn-158. Residues Asp-181 to Leu-186 and Ile-209 to Thr-211 contribute to the ATP site.

Belongs to the acetylglutamate kinase family. ArgB subfamily. As to quaternary structure, homodimer.

It localises to the cytoplasm. The enzyme catalyses N-acetyl-L-glutamate + ATP = N-acetyl-L-glutamyl 5-phosphate + ADP. It functions in the pathway amino-acid biosynthesis; L-arginine biosynthesis; N(2)-acetyl-L-ornithine from L-glutamate: step 2/4. Functionally, catalyzes the ATP-dependent phosphorylation of N-acetyl-L-glutamate. The sequence is that of Acetylglutamate kinase from Escherichia coli O6:K15:H31 (strain 536 / UPEC).